A 31-amino-acid chain; its full sequence is MLTITSYFGFLLAALTITSALFIGLNKIGLI.

A helical transmembrane segment spans residues 4–24; it reads ITSYFGFLLAALTITSALFIG.

It belongs to the PetL family. As to quaternary structure, the 4 large subunits of the cytochrome b6-f complex are cytochrome b6, subunit IV (17 kDa polypeptide, PetD), cytochrome f and the Rieske protein, while the 4 small subunits are PetG, PetL, PetM and PetN. The complex functions as a dimer.

The protein localises to the plastid. It localises to the chloroplast thylakoid membrane. In terms of biological role, component of the cytochrome b6-f complex, which mediates electron transfer between photosystem II (PSII) and photosystem I (PSI), cyclic electron flow around PSI, and state transitions. PetL is important for photoautotrophic growth as well as for electron transfer efficiency and stability of the cytochrome b6-f complex. This chain is Cytochrome b6-f complex subunit 6, found in Humulus lupulus (European hop).